The following is a 290-amino-acid chain: Ribosomal RNA small subunit methyltransferase A (290 aa).

The S-adenosyl-L-methionine site is built by Asn-27, Leu-29, Gly-54, Glu-75, Asp-100, and Asn-125.

Belongs to the class I-like SAM-binding methyltransferase superfamily. rRNA adenine N(6)-methyltransferase family. RsmA subfamily.

Its subcellular location is the cytoplasm. The enzyme catalyses adenosine(1518)/adenosine(1519) in 16S rRNA + 4 S-adenosyl-L-methionine = N(6)-dimethyladenosine(1518)/N(6)-dimethyladenosine(1519) in 16S rRNA + 4 S-adenosyl-L-homocysteine + 4 H(+). Specifically dimethylates two adjacent adenosines (A1518 and A1519) in the loop of a conserved hairpin near the 3'-end of 16S rRNA in the 30S particle. May play a critical role in biogenesis of 30S subunits. This is Ribosomal RNA small subunit methyltransferase A from Streptococcus uberis (strain ATCC BAA-854 / 0140J).